Reading from the N-terminus, the 196-residue chain is Carnitine operon protein CaiE (196 aa).

Residues 176-196 (LRQMEENRPRLQGTTDVAPKR) are disordered.

The protein belongs to the transferase hexapeptide repeat family.

The protein operates within amine and polyamine metabolism; carnitine metabolism. Overproduction of CaiE stimulates the activity of CaiB and CaiD. The sequence is that of Carnitine operon protein CaiE from Escherichia fergusonii (strain ATCC 35469 / DSM 13698 / CCUG 18766 / IAM 14443 / JCM 21226 / LMG 7866 / NBRC 102419 / NCTC 12128 / CDC 0568-73).